The following is a 154-amino-acid chain: 6,7-dimethyl-8-ribityllumazine synthase (154 aa).

Residues Phe26, 60–62, and 84–86 contribute to the 5-amino-6-(D-ribitylamino)uracil site; these read ALE and CII. 89–90 lines the (2S)-2-hydroxy-3-oxobutyl phosphate pocket; sequence ET. His92 acts as the Proton donor in catalysis. Asn117 serves as a coordination point for 5-amino-6-(D-ribitylamino)uracil. Arg131 contacts (2S)-2-hydroxy-3-oxobutyl phosphate.

The protein belongs to the DMRL synthase family.

The catalysed reaction is (2S)-2-hydroxy-3-oxobutyl phosphate + 5-amino-6-(D-ribitylamino)uracil = 6,7-dimethyl-8-(1-D-ribityl)lumazine + phosphate + 2 H2O + H(+). It participates in cofactor biosynthesis; riboflavin biosynthesis; riboflavin from 2-hydroxy-3-oxobutyl phosphate and 5-amino-6-(D-ribitylamino)uracil: step 1/2. In terms of biological role, catalyzes the formation of 6,7-dimethyl-8-ribityllumazine by condensation of 5-amino-6-(D-ribitylamino)uracil with 3,4-dihydroxy-2-butanone 4-phosphate. This is the penultimate step in the biosynthesis of riboflavin. This chain is 6,7-dimethyl-8-ribityllumazine synthase, found in Leptothrix cholodnii (strain ATCC 51168 / LMG 8142 / SP-6) (Leptothrix discophora (strain SP-6)).